A 203-amino-acid chain; its full sequence is MIVKICGITLPSQAREISEYGADYIGVITYPKSPRYVDVERIKEIKEKLKNSKLVAVVVNPSLEQVLELLNIADFIQFHGDEGLDFVKNFPKDRVIKAIRVKNESDLEKIKTFKNEDITVLVDAFKEGVYGGTGEMIDLNLLKKITDMYDKVIISGGLSESNIKEILNHVKPYGVDASSKLEVSPGVKDLDKVKKFIDIVKNR.

The protein belongs to the TrpF family.

The enzyme catalyses N-(5-phospho-beta-D-ribosyl)anthranilate = 1-(2-carboxyphenylamino)-1-deoxy-D-ribulose 5-phosphate. It functions in the pathway amino-acid biosynthesis; L-tryptophan biosynthesis; L-tryptophan from chorismate: step 3/5. This is N-(5'-phosphoribosyl)anthranilate isomerase from Sulfurihydrogenibium sp. (strain YO3AOP1).